Consider the following 71-residue polypeptide: uncharacterized protein (71 aa).

Residues 15–71 (PNFEYARRLNGKKVKIFLRNGEVLDAEVTGVSNYEIMVKVGDRNLLVFKHAIDYIEY) enclose the Sm domain.

This is an uncharacterized protein from Methanocaldococcus jannaschii (strain ATCC 43067 / DSM 2661 / JAL-1 / JCM 10045 / NBRC 100440) (Methanococcus jannaschii).